The following is a 344-amino-acid chain: Protein-glutamate methylesterase/protein-glutamine glutaminase (344 aa).

The Response regulatory domain occupies 7–124; it reads RVLVVDDSAF…SLTFRQVAPE (118 aa). At Asp-58 the chain carries 4-aspartylphosphate. Residues 154–344 enclose the CheB-type methylesterase domain; it reads PAVSGKIVVI…KIPEKLIELV (191 aa). Residues Ser-166, His-193, and Asp-289 contribute to the active site.

It belongs to the CheB family. In terms of processing, phosphorylated by CheA. Phosphorylation of the N-terminal regulatory domain activates the methylesterase activity.

The protein localises to the cytoplasm. The enzyme catalyses [protein]-L-glutamate 5-O-methyl ester + H2O = L-glutamyl-[protein] + methanol + H(+). It carries out the reaction L-glutaminyl-[protein] + H2O = L-glutamyl-[protein] + NH4(+). Functionally, involved in chemotaxis. Part of a chemotaxis signal transduction system that modulates chemotaxis in response to various stimuli. Catalyzes the demethylation of specific methylglutamate residues introduced into the chemoreceptors (methyl-accepting chemotaxis proteins or MCP) by CheR. Also mediates the irreversible deamidation of specific glutamine residues to glutamic acid. This chain is Protein-glutamate methylesterase/protein-glutamine glutaminase, found in Thermotoga maritima (strain ATCC 43589 / DSM 3109 / JCM 10099 / NBRC 100826 / MSB8).